A 171-amino-acid chain; its full sequence is NADH-quinone oxidoreductase subunit I (171 aa).

2 consecutive 4Fe-4S ferredoxin-type domains span residues 41 to 71 (LTRDPDGEERCVACNLCAAVCPVDCIALQKT) and 81 to 110 (EFFRINFSRCILCGLCEEACPTYAIQLTPD). The [4Fe-4S] cluster site is built by Cys-51, Cys-54, Cys-57, Cys-61, Cys-90, Cys-93, Cys-96, and Cys-100.

Belongs to the complex I 23 kDa subunit family. In terms of assembly, NDH-1 is composed of 14 different subunits. Subunits NuoA, H, J, K, L, M, N constitute the membrane sector of the complex. The cofactor is [4Fe-4S] cluster.

The protein localises to the cell inner membrane. It carries out the reaction a quinone + NADH + 5 H(+)(in) = a quinol + NAD(+) + 4 H(+)(out). Functionally, NDH-1 shuttles electrons from NADH, via FMN and iron-sulfur (Fe-S) centers, to quinones in the respiratory chain. The immediate electron acceptor for the enzyme in this species is believed to be ubiquinone. Couples the redox reaction to proton translocation (for every two electrons transferred, four hydrogen ions are translocated across the cytoplasmic membrane), and thus conserves the redox energy in a proton gradient. The polypeptide is NADH-quinone oxidoreductase subunit I (Methylococcus capsulatus (strain ATCC 33009 / NCIMB 11132 / Bath)).